A 686-amino-acid polypeptide reads, in one-letter code: Kinesin light chain (686 aa).

2 disordered regions span residues 1 to 23 (MSGS…SQEQ) and 158 to 204 (KYDE…SVSA). The stretch at 20–160 (SQEQIITGTR…EYMNSIKKYD (141 aa)) forms a coiled coil. TPR repeat units lie at residues 215–248 (LRTL…LEKT), 257–290 (ATML…REKT), 299–332 (AATL…REKV), 341–374 (AKQL…YEKK), 383–416 (AKTK…AHER), and 472–505 (TTTL…RRNA). Disordered regions lie at residues 520–558 (QDLS…YEKT) and 586–686 (GYVE…SGNF). Residues 675–686 (DNLSSRRQSGNF) are compositionally biased toward polar residues.

It belongs to the kinesin light chain family. Oligomeric complex composed of two heavy chains and two light chains. In terms of processing, phosphorylation may modulate the process of mechanochemical coupling.

It localises to the cytoplasm. Its subcellular location is the cytoskeleton. Functionally, kinesin is a microtubule-associated force-producing protein that may play a role in organelle transport. The light chain may function in coupling of cargo to the heavy chain or in the modulation of its ATPase activity. This is Kinesin light chain from Strongylocentrotus purpuratus (Purple sea urchin).